We begin with the raw amino-acid sequence, 461 residues long: ADP-specific phosphofructokinase (461 aa).

In terms of domain architecture, ADPK spans 1–457; it reads MVRELLEKAR…FTSYLAMLKE (457 aa). Residues E268, E298, and D441 each contribute to the Mg(2+) site. D441 acts as the Proton acceptor in catalysis.

Belongs to the carbohydrate kinase PfkC family. The cofactor is Mg(2+).

It localises to the cytoplasm. It carries out the reaction beta-D-fructose 6-phosphate + ADP = beta-D-fructose 1,6-bisphosphate + AMP + H(+). The protein operates within carbohydrate degradation; glycolysis. In terms of biological role, catalyzes the phosphorylation of fructose 6-phosphate to fructose 1,6-bisphosphate using ADP as the phosphate donor. This Thermococcus kodakarensis (strain ATCC BAA-918 / JCM 12380 / KOD1) (Pyrococcus kodakaraensis (strain KOD1)) protein is ADP-specific phosphofructokinase.